We begin with the raw amino-acid sequence, 287 residues long: uncharacterized protein (287 aa).

This is an uncharacterized protein from Acanthamoeba polyphaga mimivirus (APMV).